The primary structure comprises 674 residues: Sodium/myo-inositol cotransporter 2 (674 aa).

Over 1-27 (MESSPSSPQPTQSDPLAVFPQRTLEPA) the chain is Extracellular. A helical membrane pass occupies residues 28-48 (DIAVLVLYFLFVLAVGLWSTV). The Cytoplasmic portion of the chain corresponds to 49 to 56 (KTRRDTVK). The chain crosses the membrane as a helical span at residues 57-77 (GYFLAGGDMVWWPVGASLFAS). The Extracellular portion of the chain corresponds to 78-102 (NVGSGHFVGLAGSGAAAGLSVTAYE). Residues 103–123 (FNGIFSVLMLAWIFLPIYIAG) form a helical membrane-spanning segment. At 124–140 (QVTTMPEYLRKRFGGSR) the chain is on the cytoplasmic side. A helical membrane pass occupies residues 141–161 (IPITLAVLYLFIYIFTKISVD). The Extracellular segment spans residues 162 to 180 (MYAGAIFIQQSLHLNLYLA). The chain crosses the membrane as a helical span at residues 181-201 (IVGLLAITALYTIAGGLAAVI). Residues 202–208 (YTDALQT) lie on the Cytoplasmic side of the membrane. The helical transmembrane segment at 209–229 (LIMLIGALTLMGYSFAAVGGM) threads the bilayer. Residues 230 to 272 (EGLKEKYFLALASNRSGNSSCGLPREDAFHIFRDPLTSDLPWP) lie on the Extracellular side of the membrane. Residues 273-293 (GILFGMSIPSLWYWCTDQVIV) form a helical membrane-spanning segment. At 294–308 (QRTLAAKNLSHAKGG) the chain is on the cytoplasmic side. A helical transmembrane segment spans residues 309–329 (SLMAAYLKVLPLFIMVFPGMV). The Extracellular portion of the chain corresponds to 330–374 (SRVLFPDQVACADPEICQKVCSNPAGCSDIAYPKLVLELLPMGLR). The chain crosses the membrane as a helical span at residues 375 to 397 (GLMMAVMVAALMSSLTSIFNSAS). Residues 398–418 (TIFTMDLWNHLRPRASERELM) lie on the Cytoplasmic side of the membrane. Residues 419 to 439 (IVGRVFVLLLVLVSILWIPVV) form a helical membrane-spanning segment. Over 440–446 (QASQGGQ) the chain is Extracellular. The helical transmembrane segment at 447 to 467 (LFIYIQSISSYLQPPVAVVFI) threads the bilayer. At 468–479 (MGCFWKRTNEKG) the chain is on the cytoplasmic side. The helical transmembrane segment at 480-500 (AFSGLILGLLLGLVRLVLDFI) threads the bilayer. Over 501–518 (YPQPRCDQPDERPAVVRD) the chain is Extracellular. A helical transmembrane segment spans residues 519–539 (VHYLYFSMILSSVTLVTVSTV). The Cytoplasmic segment spans residues 540–653 (SWCTAPPTQE…SLEEIPLVKT (114 aa)). The helical transmembrane segment at 654-674 (LLDINLIVCISCAIFLWGYFA) threads the bilayer.

Belongs to the sodium:solute symporter (SSF) (TC 2.A.21) family.

Its subcellular location is the membrane. It localises to the apical cell membrane. The catalysed reaction is myo-inositol(out) + 2 Na(+)(out) = myo-inositol(in) + 2 Na(+)(in). It carries out the reaction 1D-chiro-inositol(out) + 2 Na(+)(out) = 1D-chiro-inositol(in) + 2 Na(+)(in). The enzyme catalyses D-glucose(out) + 2 Na(+)(out) = D-glucose(in) + 2 Na(+)(in). It catalyses the reaction D-xylose(out) + 2 Na(+)(out) = D-xylose(in) + 2 Na(+)(in). Its activity is regulated as follows. MI transport activity inhibited by D-chiro-inositol (DCI), phlorizin (Pz) and sodium (Na(+)). Insulin increases D-chiro-inositol uptake. In terms of biological role, involved in the sodium-dependent cotransport of myo-inositol (MI) with a Na(+):MI stoichiometry of 2:1. Exclusively responsible for apical MI transport and absorption in intestine. Can also transport D-chiro-inositol (DCI) but not L-fucose. Exhibits stereospecific cotransport of both D-glucose and D-xylose. May induce apoptosis through the TNF-alpha, PDCD1 pathway. May play a role in the regulation of MI concentration in serum, involving reabsorption in at least the proximal tubule of the kidney. This is Sodium/myo-inositol cotransporter 2 from Sus scrofa (Pig).